The following is a 178-amino-acid chain: Large ribosomal subunit protein uL6 (178 aa).

The protein belongs to the universal ribosomal protein uL6 family. Part of the 50S ribosomal subunit.

This protein binds to the 23S rRNA, and is important in its secondary structure. It is located near the subunit interface in the base of the L7/L12 stalk, and near the tRNA binding site of the peptidyltransferase center. The polypeptide is Large ribosomal subunit protein uL6 (Thermoplasma acidophilum (strain ATCC 25905 / DSM 1728 / JCM 9062 / NBRC 15155 / AMRC-C165)).